A 264-amino-acid polypeptide reads, in one-letter code: Small ribosomal subunit protein eS1A (264 aa).

The interval 233–264 (GEGGGTGKPAGDETGAKVERADGYEPPVQESV) is disordered. Residues 242–255 (AGDETGAKVERADG) are compositionally biased toward basic and acidic residues.

It belongs to the eukaryotic ribosomal protein eS1 family. Component of the small ribosomal subunit. Mature ribosomes consist of a small (40S) and a large (60S) subunit. The 40S subunit contains about 33 different proteins and 1 molecule of RNA (18S). The 60S subunit contains about 49 different proteins and 3 molecules of RNA (28S, 5.8S and 5S). Part of the small subunit (SSU) processome, composed of more than 70 proteins and the RNA chaperone small nucleolar RNA (snoRNA) U3.

Its subcellular location is the cytoplasm. It is found in the nucleus. The protein localises to the nucleolus. In terms of biological role, component of the small ribosomal subunit. The ribosome is a large ribonucleoprotein complex responsible for the synthesis of proteins in the cell. Part of the small subunit (SSU) processome, first precursor of the small eukaryotic ribosomal subunit. During the assembly of the SSU processome in the nucleolus, many ribosome biogenesis factors, an RNA chaperone and ribosomal proteins associate with the nascent pre-rRNA and work in concert to generate RNA folding, modifications, rearrangements and cleavage as well as targeted degradation of pre-ribosomal RNA by the RNA exosome. May play a role during erythropoiesis. This Xenopus laevis (African clawed frog) protein is Small ribosomal subunit protein eS1A (rps3a-a).